We begin with the raw amino-acid sequence, 29 residues long: Chassatide C10 (29 aa).

Positions Gly1 to Asn29 form a cross-link, cyclopeptide (Gly-Asn). Cystine bridges form between Cys4–Cys18, Cys8–Cys20, and Cys13–Cys25.

This is a cyclic peptide.

In terms of biological role, probably participates in a plant defense mechanism. Has no activity against bacteria up to a concentration of 80 uM. Has cytotoxic but no hemolytic activity. The chain is Chassatide C10 from Chassalia chartacea (Chassalia curviflora).